We begin with the raw amino-acid sequence, 392 residues long: 1-deoxy-D-xylulose 5-phosphate reductoisomerase (392 aa).

The NADPH site is built by Thr10, Gly11, Ser12, Ile13, and Asn124. Lys125 is a binding site for 1-deoxy-D-xylulose 5-phosphate. Glu126 provides a ligand contact to NADPH. Asp150 is a Mn(2+) binding site. Residues Ser151, Glu152, Ser180, and His203 each contribute to the 1-deoxy-D-xylulose 5-phosphate site. Residue Glu152 participates in Mn(2+) binding. An NADPH-binding site is contributed by Gly209. 4 residues coordinate 1-deoxy-D-xylulose 5-phosphate: Ser216, Asn221, Lys222, and Glu225. Glu225 is a binding site for Mn(2+).

It belongs to the DXR family. Mg(2+) is required as a cofactor. The cofactor is Mn(2+).

The enzyme catalyses 2-C-methyl-D-erythritol 4-phosphate + NADP(+) = 1-deoxy-D-xylulose 5-phosphate + NADPH + H(+). It participates in isoprenoid biosynthesis; isopentenyl diphosphate biosynthesis via DXP pathway; isopentenyl diphosphate from 1-deoxy-D-xylulose 5-phosphate: step 1/6. Functionally, catalyzes the NADPH-dependent rearrangement and reduction of 1-deoxy-D-xylulose-5-phosphate (DXP) to 2-C-methyl-D-erythritol 4-phosphate (MEP). This chain is 1-deoxy-D-xylulose 5-phosphate reductoisomerase, found in Saccharophagus degradans (strain 2-40 / ATCC 43961 / DSM 17024).